The sequence spans 303 residues: Nucleotide-binding protein SAB0719 (303 aa).

18–25 contributes to the ATP binding site; that stretch reads GLSGAGKS. 69–72 serves as a coordination point for GTP; that stretch reads DLRG.

Belongs to the RapZ-like family.

Functionally, displays ATPase and GTPase activities. This is Nucleotide-binding protein SAB0719 from Staphylococcus aureus (strain bovine RF122 / ET3-1).